The chain runs to 275 residues: MSQQLQQIIDNAWENRAELSPKAASAEIREAVAHAIEQLDRGALRVAEKIDGAWTVHQWLKKAVLLSFRLEDNAPMPAGGYSQFYDKVPSKFANYTAEDFAAGGFRVVPPAIARRGSFIAKNVVLMPSYTNIGAYVDEGTMVDTWATVGSCAQIGKNVHLSGGVGIGGVLEPLQANPVIIEDNCFIGARSEVVEGVIVEENSVISMGVYLGQSTKIYDRETGEVTYGRIPAGSVVVAGNLPAKDGTHSLYCAVIVKKVDAKTRAKVGLNELLRGD.

Residues arginine 106 and aspartate 143 each coordinate substrate.

The protein belongs to the transferase hexapeptide repeat family. In terms of assembly, homotrimer.

Its subcellular location is the cytoplasm. It carries out the reaction (S)-2,3,4,5-tetrahydrodipicolinate + succinyl-CoA + H2O = (S)-2-succinylamino-6-oxoheptanedioate + CoA. It participates in amino-acid biosynthesis; L-lysine biosynthesis via DAP pathway; LL-2,6-diaminopimelate from (S)-tetrahydrodipicolinate (succinylase route): step 1/3. The polypeptide is 2,3,4,5-tetrahydropyridine-2,6-dicarboxylate N-succinyltransferase (Burkholderia mallei (strain NCTC 10247)).